We begin with the raw amino-acid sequence, 97 residues long: Putative membrane protein insertion efficiency factor (97 aa).

The protein belongs to the UPF0161 family.

The protein localises to the cell inner membrane. Could be involved in insertion of integral membrane proteins into the membrane. The polypeptide is Putative membrane protein insertion efficiency factor (Chlamydia muridarum (strain MoPn / Nigg)).